The following is a 308-amino-acid chain: Glycine--tRNA ligase alpha subunit (308 aa).

It belongs to the class-II aminoacyl-tRNA synthetase family. As to quaternary structure, tetramer of two alpha and two beta subunits.

It localises to the cytoplasm. It carries out the reaction tRNA(Gly) + glycine + ATP = glycyl-tRNA(Gly) + AMP + diphosphate. The sequence is that of Glycine--tRNA ligase alpha subunit from Streptococcus pyogenes serotype M3 (strain SSI-1).